Here is a 445-residue protein sequence, read N- to C-terminus: Ubiquitin carboxyl-terminal hydrolase MINDY-3 (445 aa).

The active-site Nucleophile is the C51. Residue S125 is modified to Phosphoserine. Residue H287 is the Proton acceptor of the active site.

The protein belongs to the MINDY deubiquitinase family. FAM188 subfamily. Interacts with COPS5. In terms of tissue distribution, widely expressed with high levels in heart, skeletal muscle, and kidney, and low levels in liver and brain. Also expressed in lung (at protein level).

It localises to the nucleus. It carries out the reaction Thiol-dependent hydrolysis of ester, thioester, amide, peptide and isopeptide bonds formed by the C-terminal Gly of ubiquitin (a 76-residue protein attached to proteins as an intracellular targeting signal).. Its function is as follows. Hydrolase that can remove 'Lys-48'-linked conjugated ubiquitin from proteins. This is Ubiquitin carboxyl-terminal hydrolase MINDY-3 from Homo sapiens (Human).